Reading from the N-terminus, the 65-residue chain is Large ribosomal subunit protein bL35 (65 aa).

The protein belongs to the bacterial ribosomal protein bL35 family.

The sequence is that of Large ribosomal subunit protein bL35 from Yersinia pseudotuberculosis serotype O:1b (strain IP 31758).